The chain runs to 286 residues: Polyamine aminopropyltransferase (286 aa).

The PABS domain maps to 5–238 (KTWHEKLYCH…GVMVFAWGTN (234 aa)). His-64 and Asp-88 together coordinate spermidine. S-methyl-5'-thioadenosine is bound by residues Glu-108 and 140–141 (DG). The active-site Proton acceptor is Asp-158. 158 to 161 (DSTD) contacts spermidine.

Belongs to the spermidine/spermine synthase family. Homodimer or homotetramer.

It is found in the cytoplasm. It carries out the reaction S-adenosyl 3-(methylsulfanyl)propylamine + putrescine = S-methyl-5'-thioadenosine + spermidine + H(+). The protein operates within amine and polyamine biosynthesis; spermidine biosynthesis; spermidine from putrescine: step 1/1. Catalyzes the irreversible transfer of a propylamine group from the amino donor S-adenosylmethioninamine (decarboxy-AdoMet) to putrescine (1,4-diaminobutane) to yield spermidine. The sequence is that of Polyamine aminopropyltransferase from Buchnera aphidicola subsp. Acyrthosiphon pisum (strain 5A).